A 221-amino-acid polypeptide reads, in one-letter code: uncharacterized protein (221 aa).

Composition is skewed to low complexity over residues 1-27 and 140-162; these read MNNNNNNNNNNNNNNNNNNNNNNNNNN and TTTSSTTTTTTTTSTTTTNNSSS. Disordered stretches follow at residues 1–28 and 140–205; these read MNNNNNNNNNNNNNNNNNNNNNNNNNNE and TTTS…NIGG.

This is an uncharacterized protein from Dictyostelium discoideum (Social amoeba).